We begin with the raw amino-acid sequence, 463 residues long: MTTVQLQKTNQPSIKASRGSYWITTFGCQMNKADSERMSGILEYMGYYPAEEELKADLVLYNTCTIRDSAEQKVYSYLGRQAIRKRSLPNLKIVVAGCLAQQEGESLLRRVPEIDLLMGPQHCNRLESLLNQVDSGQQVLATEEQFILEDITTPRRDSSICGWVNIIYGCNERCTYCVVPSVRGKEQSRTPEAIKSEVEDLAKSGYKEITLLGQNIDAYGRDFQSQNKEDSAQVTLSYLLKYIHDIEGIERIRFATSHPRYFTKELIDTCSELPKVCEHFHIPFQSGSNKILKNMGRGYTIESYKNIINYIKAKIPKAAISGDAIVAFPGESETDYEQTLSLIDEIKFDHVNTAAYSPRPNTPAATWPRQLNEDIKVKRLREINSLVENIAKERNQRYKNTSQEILIENINPKDSFQLMGRTRTNRLTFFPRSLKNGVENKLGELIKVKITDVRPFSLTAKLL.

In terms of domain architecture, MTTase N-terminal spans 19–135; it reads GSYWITTFGC…LESLLNQVDS (117 aa). Residues Cys-28, Cys-64, Cys-98, Cys-170, Cys-174, and Cys-177 each coordinate [4Fe-4S] cluster. A Radical SAM core domain is found at 156 to 393; it reads RDSSICGWVN…NSLVENIAKE (238 aa). A TRAM domain is found at 396–463; it reads QRYKNTSQEI…RPFSLTAKLL (68 aa).

Belongs to the methylthiotransferase family. MiaB subfamily. In terms of assembly, monomer. [4Fe-4S] cluster is required as a cofactor.

It localises to the cytoplasm. It catalyses the reaction N(6)-dimethylallyladenosine(37) in tRNA + (sulfur carrier)-SH + AH2 + 2 S-adenosyl-L-methionine = 2-methylsulfanyl-N(6)-dimethylallyladenosine(37) in tRNA + (sulfur carrier)-H + 5'-deoxyadenosine + L-methionine + A + S-adenosyl-L-homocysteine + 2 H(+). Its function is as follows. Catalyzes the methylthiolation of N6-(dimethylallyl)adenosine (i(6)A), leading to the formation of 2-methylthio-N6-(dimethylallyl)adenosine (ms(2)i(6)A) at position 37 in tRNAs that read codons beginning with uridine. The chain is tRNA-2-methylthio-N(6)-dimethylallyladenosine synthase from Prochlorococcus marinus (strain NATL2A).